The primary structure comprises 290 residues: MDYMRIFSVFVVTLWIIRVDARVFGGRGIEKFVTFGQNYIVTWGQSHVSTLHSGEEVDLYMDQSSGGGFESKDAYGSGLFEMRIKVPSGNTGGIVTAFYLTSKGGGHDEIDFEFLGNNNGKPVTLQTNLFLNGEGNREERFLLWFNPTKHYHTYGLLWNPYQIVFYVDNIPIRVYKNENGVSYPSKPMQVEASLWNGDDWATDGGRTKVNWSYSPFIAHFRDFALSGCNIDGRSNNVGACESSNYWWNAGNYQRLSGNEQKLYEHVRSKYMNYDYCTDRSKYQTPPRECY.

A signal peptide spans 1-21 (MDYMRIFSVFVVTLWIIRVDA). Positions 22–220 (RVFGGRGIEK…WSYSPFIAHF (199 aa)) constitute a GH16 domain. Glu109 functions as the Nucleophile in the catalytic mechanism. The active-site Proton donor is Glu113. Residues Glu113, 126–128 (QTN), 136–138 (NRE), 199–200 (DW), and Gly204 contribute to the xyloglucan site. Asn210 is a glycosylation site (N-linked (GlcNAc...) asparagine). 2 disulfides stabilise this stretch: Cys228–Cys240 and Cys276–Cys289.

This sequence belongs to the glycosyl hydrolase 16 family. XTH group 1 subfamily. In terms of processing, contains at least one intrachain disulfide bond essential for its enzymatic activity. Predominantly expressed in flower buds.

The protein localises to the secreted. The protein resides in the cell wall. It is found in the extracellular space. It localises to the apoplast. The catalysed reaction is breaks a beta-(1-&gt;4) bond in the backbone of a xyloglucan and transfers the xyloglucanyl segment on to O-4 of the non-reducing terminal glucose residue of an acceptor, which can be a xyloglucan or an oligosaccharide of xyloglucan.. Functionally, catalyzes xyloglucan endohydrolysis (XEH) and/or endotransglycosylation (XET). Cleaves and religates xyloglucan polymers, an essential constituent of the primary cell wall, and thereby participates in cell wall construction of growing tissues. This Arabidopsis thaliana (Mouse-ear cress) protein is Xyloglucan endotransglucosylase/hydrolase protein 3 (XTH3).